The sequence spans 303 residues: Nucleotide-binding protein USA300HOU_0794 (303 aa).

18 to 25 (GLSGAGKS) contributes to the ATP binding site. 69 to 72 (DLRG) serves as a coordination point for GTP.

The protein belongs to the RapZ-like family.

In terms of biological role, displays ATPase and GTPase activities. The protein is Nucleotide-binding protein USA300HOU_0794 of Staphylococcus aureus (strain USA300 / TCH1516).